A 291-amino-acid chain; its full sequence is tRNA-cytidine(32) 2-sulfurtransferase (291 aa).

Residues 36 to 41 (SGGKDS) carry the PP-loop motif motif. The [4Fe-4S] cluster site is built by C111, C114, and C202. The disordered stretch occupies residues 259 to 291 (DPWLDAEDEEAEDCGEPSAGDGVVSLGGARGGR). The segment covering 262 to 273 (LDAEDEEAEDCG) has biased composition (acidic residues).

The protein belongs to the TtcA family. Homodimer. It depends on Mg(2+) as a cofactor. Requires [4Fe-4S] cluster as cofactor.

The protein localises to the cytoplasm. It carries out the reaction cytidine(32) in tRNA + S-sulfanyl-L-cysteinyl-[cysteine desulfurase] + AH2 + ATP = 2-thiocytidine(32) in tRNA + L-cysteinyl-[cysteine desulfurase] + A + AMP + diphosphate + H(+). Its pathway is tRNA modification. Functionally, catalyzes the ATP-dependent 2-thiolation of cytidine in position 32 of tRNA, to form 2-thiocytidine (s(2)C32). The sulfur atoms are provided by the cysteine/cysteine desulfurase (IscS) system. The protein is tRNA-cytidine(32) 2-sulfurtransferase of Anaeromyxobacter sp. (strain K).